The chain runs to 270 residues: Phosphatidylglycerol--prolipoprotein diacylglyceryl transferase (270 aa).

The next 7 helical transmembrane spans lie at 10–30 (VAVA…LVGI), 56–76 (LIFW…VLFY), 92–112 (WKGG…AWWF), 120–140 (FFQL…AGRI), 175–195 (SQLY…NLYA), 202–222 (MAVS…VEFV), and 237–257 (VTMG…LIWL). Residue R139 coordinates a 1,2-diacyl-sn-glycero-3-phospho-(1'-sn-glycerol).

This sequence belongs to the Lgt family.

The protein resides in the cell inner membrane. It catalyses the reaction L-cysteinyl-[prolipoprotein] + a 1,2-diacyl-sn-glycero-3-phospho-(1'-sn-glycerol) = an S-1,2-diacyl-sn-glyceryl-L-cysteinyl-[prolipoprotein] + sn-glycerol 1-phosphate + H(+). The protein operates within protein modification; lipoprotein biosynthesis (diacylglyceryl transfer). In terms of biological role, catalyzes the transfer of the diacylglyceryl group from phosphatidylglycerol to the sulfhydryl group of the N-terminal cysteine of a prolipoprotein, the first step in the formation of mature lipoproteins. This Pseudomonas syringae pv. syringae (strain B728a) protein is Phosphatidylglycerol--prolipoprotein diacylglyceryl transferase.